Here is a 329-residue protein sequence, read N- to C-terminus: uncharacterized protein (329 aa).

In terms of domain architecture, Nudix hydrolase spans 27 to 185 (PRRASVAVII…IQIDSSRALK (159 aa)). Helical transmembrane passes span 123–143 (VITS…VFIL), 227–247 (PFLR…LSPS), and 303–323 (LTLL…FLII).

Its subcellular location is the membrane. This is an uncharacterized protein from Schizosaccharomyces pombe (strain 972 / ATCC 24843) (Fission yeast).